The chain runs to 1047 residues: MTAELQAASGGPGGLEADCQVLNKMKEITGIQDADFLHAALKAAKGNLMEALIVLTEERDQEPVQNTAAAEPSSWEGSAVGKEPPQGGAAFDPEKKGDVHSAVAYGQLESPKAHAAERPQEVHSPEHKNRSKRKRCEVWGENSKQSDWKRVGDWPVGMKNIGNTCWFSAVIQSLFQLPQFRRLVLSYSFPPNVLESCRTRTGKRNIAFMQELQCLFALMLGTRRKFVDPSAALELLRDAFKSTEEQQQDVSEFTHKLLDWLEDAFQLAVNVRSPGDKSENPMVQLFYGTFLTEGVHEGNTFSKIETFGQYPLQVNGYRNLNECLEGAMVEGEMDEETATQSVKYVQERWFTKLPPVLTFELSRFEFNQSLGQPEKIHTKLEFPQTIFMDRYLYCSKELIQTKREEMKKLKEKMLVLQQKLERYMKYGSGPARFPLPDMLQYVLEFITTKPAGAVSSACVSSTEDSQMMDRQSQGESLILGTPSQPDSMLDGKDGKPEDEAVLLANSSPQQQLNAPLQPSEPPAEMSDCPAPHVVSEEEMNLVTTCLQRWRNEIEQDVRDLKESIARVSLSIDEMYSDPHLQQVPYHLHAVLVHEGQANAGHYWAFIYDQPRKSWLKYNDISVTESSWEELERDSFGGLRNASAYCLMYISDKVSHVVAGEGDGSEVGQFQKEVEALPPELRRYIQEDNWRLEQEAEEWEEEQSCKIPSTASESQELSPESGLDPPAAHEQSLRSLSSEHAMIAKEQTAKAIANAANVYEKNGVEAALCEAFHEEYSRLYLLSKETPTPQNDARLQHVLVYFLQNDAPQQIVERTLLEQFADKNLSYDERSISIMKVARDKLKEIGPDEVNMEEYKKWHEDYSLFRKVSVYLLTGLELYQNRKYKESLTYLIYAYQSNTTLLKKGANRGVNESLITLYRRKCLLKLNEVASSLFVSCEEAHVAEGISILNELIIPCMHLINNFDISREDMDAIEVMRNRWCSYLGREDMDASLQIRLGELLPRLLDGSTEVVVLKEPPKIRPNSPYDLCSRFAAVMESIHDASTVTVK.

2 disordered regions span residues 60–95 (DQEPVQNTAAAEPSSWEGSAVGKEPPQGGAAFDPEK) and 110–138 (SPKAHAAERPQEVHSPEHKNRSKRKRCEV). The region spanning 94 to 113 (EKKGDVHSAVAYGQLESPKA) is the UIM domain. The span at 111–128 (PKAHAAERPQEVHSPEHK) shows a compositional bias: basic and acidic residues. The region spanning 156 to 651 (VGMKNIGNTC…SAYCLMYISD (496 aa)) is the USP domain. The Nucleophile role is filled by Cys-165. A compositionally biased stretch (polar residues) spans 461-486 (STEDSQMMDRQSQGESLILGTPSQPD). The interval 461 to 528 (STEDSQMMDR…SEPPAEMSDC (68 aa)) is disordered. Basic and acidic residues predominate over residues 489–498 (LDGKDGKPED). The segment covering 504–516 (ANSSPQQQLNAPL) has biased composition (polar residues). The Proton acceptor role is filled by His-601. A disordered region spans residues 694–735 (EAEEWEEEQSCKIPSTASESQELSPESGLDPPAAHEQSLRSL). A compositionally biased stretch (polar residues) spans 705-717 (KIPSTASESQELS).

This sequence belongs to the peptidase C19 family. USP28 subfamily.

It is found in the nucleus. Its subcellular location is the nucleoplasm. It catalyses the reaction Thiol-dependent hydrolysis of ester, thioester, amide, peptide and isopeptide bonds formed by the C-terminal Gly of ubiquitin (a 76-residue protein attached to proteins as an intracellular targeting signal).. Deubiquitinase involved in DNA damage response checkpoint and MYC proto-oncogene stability. Involved in DNA damage induced apoptosis by specifically deubiquitinating proteins of the DNA damage pathway such as CLSPN. Also involved in G2 DNA damage checkpoint, by deubiquitinating CLSPN, and preventing its degradation by the anaphase promoting complex/cyclosome (APC/C). Specifically deubiquitinates MYC in the nucleoplasm, leading to prevent MYC degradation by the proteasome. Deubiquitinates ZNF304, hence may prevent ZNF304 degradation by the proteasome, leading to the activated KRAS-mediated promoter hypermethylation and transcriptional silencing of tumor suppressor genes (TSGs). This Gallus gallus (Chicken) protein is Ubiquitin carboxyl-terminal hydrolase 28 (USP28).